We begin with the raw amino-acid sequence, 491 residues long: Phosphoethanolamine N-methyltransferase 1 (491 aa).

A2 is modified (N-acetylalanine). The S-adenosyl-L-homocysteine site is built by G61, R66, D82, D107, V108, and N126. Positions 159, 164, 165, 169, and 176 each coordinate phosphocholine. Residues 245-246 (QY) and Y254 each bind N-methylethanolamine phosphate. Position 254 (Y254) interacts with phosphocholine. 7 residues coordinate S-adenosyl-L-homocysteine: V263, S264, G290, D312, D338, C339, and R355. Phosphocholine is bound by residues Y386, Y400, R404, Y406, and K472. N-methylethanolamine phosphate contacts are provided by residues Y386, Y400, 404 to 406 (RGY), and K472.

It belongs to the class I-like SAM-binding methyltransferase superfamily. PEAMT family. Highly expressed in the meristem and elongation zones of the root. Expressed in differentiated root epidermal cells. Highly expressed in leaf vasculature.

It is found in the cytoplasm. The enzyme catalyses phosphoethanolamine + S-adenosyl-L-methionine = N-methylethanolamine phosphate + S-adenosyl-L-homocysteine + H(+). It catalyses the reaction N-methylethanolamine phosphate + S-adenosyl-L-methionine = N,N-dimethylethanolamine phosphate + S-adenosyl-L-homocysteine + H(+). The catalysed reaction is N,N-dimethylethanolamine phosphate + S-adenosyl-L-methionine = phosphocholine + S-adenosyl-L-homocysteine + H(+). It participates in phospholipid metabolism; phosphatidylcholine biosynthesis; phosphocholine from phosphoethanolamine: step 1/1. Functionally, involved in phosphocholine biosynthesis. Catalyzes the N-methylation of phosphoethanolamine, phosphomonomethylethanolamine and phosphodimethylethanolamine, the three methylation steps required to convert phosphoethanolamine to phosphocholine (PC). Required for root system development and epidermal cell integrity through its role in choline and phospholipid metabolism. In association with NMT3, regulates PC homeostasis, phase transition at the shoot apex, coordinated organ development, and fertility. In association with NMT3, involved in phosphatidylcholine biosynthesis and vascular development. In association with NMT2, involved in the production of phosphatidylcholine in roots, essential for root development. In association with NMT2 produce phosphocholine mainly for leaf growth maintenance. Contributes to the regulation of overall root zonation dynamics through reactive oxygen species (ROS) and auxin-regulated cell differentiation. Participates in root development of primary root elongation under salt stress conditions by balancing reactive oxygen species (ROS) production and distribution through abscisic acid (ABA) signaling. The chain is Phosphoethanolamine N-methyltransferase 1 from Arabidopsis thaliana (Mouse-ear cress).